Consider the following 1031-residue polypeptide: Sister chromatid cohesion 1 protein 4 (1031 aa).

Residues 461–481 (TPDKEDPGTCNDDAGNNNITG) form a disordered region. Positions 545-552 (TKRLRSAP) match the Nuclear localization signal motif. 3 disordered regions span residues 661-703 (VEEN…EELK), 742-772 (EKLD…ADPN), and 803-835 (ELPH…VGST). Composition is skewed to basic and acidic residues over residues 742–762 (EKLD…HDGE) and 803–825 (ELPH…RDDQ).

Belongs to the rad21 family. In terms of assembly, component of the cohesin complex. In terms of tissue distribution, expressed in tissues containing dividing cells such as seedlings, flower buds, flowers and inflorescence meristem tissue.

The protein resides in the nucleus. It localises to the chromosome. Its subcellular location is the centromere. Its function is as follows. Involved in sister chromatid and centromere cohesion during mitosis. This chain is Sister chromatid cohesion 1 protein 4 (SYN4), found in Arabidopsis thaliana (Mouse-ear cress).